The primary structure comprises 247 residues: Terpene cyclase ausL (247 aa).

Helical transmembrane passes span 49–69 (AIAV…AWIY), 75–95 (HWQG…AATL), 114–134 (LVLL…CLAL), 138–158 (GALG…SGAV), 171–191 (SLVI…KLCI), and 206–226 (PMCW…PVLY).

It belongs to the paxB family.

The protein localises to the membrane. Its pathway is secondary metabolite biosynthesis; terpenoid biosynthesis. Terpene cyclase; part of the gene cluster that mediates the biosynthesis of calidodehydroaustin, a fungal meroterpenoid. The first step of the pathway is the synthesis of 3,5-dimethylorsellinic acid by the polyketide synthase ausA. 3,5-dimethylorsellinic acid is then prenylated by the polyprenyl transferase ausN. Further epoxidation by the FAD-dependent monooxygenase ausM and cyclization by the probable terpene cyclase ausL lead to the formation of protoaustinoid A. Protoaustinoid A is then oxidized to spiro-lactone preaustinoid A3 by the combined action of the FAD-binding monooxygenases ausB and ausC, and the dioxygenase ausE. Acid-catalyzed keto-rearrangement and ring contraction of the tetraketide portion of preaustinoid A3 by ausJ lead to the formation of preaustinoid A4. The aldo-keto reductase ausK, with the help of ausH, is involved in the next step by transforming preaustinoid A4 into isoaustinone which is in turn hydroxylated by the P450 monooxygenase ausI to form austinolide. The cytochrome P450 monooxygenase ausG modifies austinolide to austinol. Austinol is further acetylated to austin by the O-acetyltransferase ausP, which spontaneously changes to dehydroaustin. The cytochrome P450 monooxygenase ausR then converts dehydroaustin is into 7-dehydrodehydroaustin. The hydroxylation catalyzed by ausR permits the O-acetyltransferase ausQ to add an additional acetyl group to the molecule, leading to the formation of acetoxydehydroaustin. The short chain dehydrogenase ausT catalyzes the reduction of the double bond present between carbon atoms 1 and 2 to convert 7-dehydrodehydroaustin into 1,2-dihydro-7-hydroxydehydroaustin. AusQ catalyzes not only an acetylation reaction but also the addition of the PKS ausV diketide product to 1,2-dihydro-7-hydroxydehydroaustin, forming precalidodehydroaustin. Finally, the iron/alpha-ketoglutarate-dependent dioxygenase converts precalidodehydroaustin into calidodehydroaustin. This chain is Terpene cyclase ausL, found in Aspergillus calidoustus.